A 140-amino-acid polypeptide reads, in one-letter code: Small ribosomal subunit protein uS12 (140 aa).

The disordered stretch occupies residues Lys-33–Pro-55.

The protein belongs to the universal ribosomal protein uS12 family. As to quaternary structure, part of the 30S ribosomal subunit. Contacts proteins S8 and S17. May interact with IF1 in the 30S initiation complex.

Its function is as follows. With S4 and S5 plays an important role in translational accuracy. Functionally, interacts with and stabilizes bases of the 16S rRNA that are involved in tRNA selection in the A site and with the mRNA backbone. Located at the interface of the 30S and 50S subunits, it traverses the body of the 30S subunit contacting proteins on the other side and probably holding the rRNA structure together. The combined cluster of proteins S8, S12 and S17 appears to hold together the shoulder and platform of the 30S subunit. The protein is Small ribosomal subunit protein uS12 of Geobacillus kaustophilus (strain HTA426).